The following is a 603-amino-acid chain: Proline--tRNA ligase (603 aa).

The protein belongs to the class-II aminoacyl-tRNA synthetase family. ProS type 1 subfamily. As to quaternary structure, homodimer.

It localises to the cytoplasm. The catalysed reaction is tRNA(Pro) + L-proline + ATP = L-prolyl-tRNA(Pro) + AMP + diphosphate. In terms of biological role, catalyzes the attachment of proline to tRNA(Pro) in a two-step reaction: proline is first activated by ATP to form Pro-AMP and then transferred to the acceptor end of tRNA(Pro). As ProRS can inadvertently accommodate and process non-cognate amino acids such as alanine and cysteine, to avoid such errors it has two additional distinct editing activities against alanine. One activity is designated as 'pretransfer' editing and involves the tRNA(Pro)-independent hydrolysis of activated Ala-AMP. The other activity is designated 'posttransfer' editing and involves deacylation of mischarged Ala-tRNA(Pro). The misacylated Cys-tRNA(Pro) is not edited by ProRS. The chain is Proline--tRNA ligase from Microcystis aeruginosa (strain NIES-843 / IAM M-2473).